The sequence spans 524 residues: Zinc finger CCCH domain-containing protein 37 (524 aa).

Residues alanine 19–leucine 39 form a disordered region. A compositionally biased stretch (pro residues) spans proline 24–proline 35. 3 C3H1-type zinc fingers span residues arginine 174–tryptophan 202, arginine 225–glutamate 253, and arginine 268–aspartate 296. The interval proline 300–threonine 319 is disordered. 3 C3H1-type zinc fingers span residues arginine 340 to arginine 368, arginine 420 to aspartate 448, and arginine 473 to proline 501. The interval methionine 505–glutamine 524 is disordered. Residues alanine 512–glutamine 524 show a composition bias toward low complexity.

As to quaternary structure, interacts with HEN4. Interacts with FLK and PEP. In terms of tissue distribution, highly expressed in inflorescences, at intermediate levels in leaves and stems and at lower levels in roots.

The protein resides in the nucleus speckle. Involved in flower development. Functions in floral reproductive organ identity by binding AGAMOUS (AG) pre-mRNA and promoting its processing. Functions in association with HUA2 and HEN4. This is Zinc finger CCCH domain-containing protein 37 (HUA1) from Arabidopsis thaliana (Mouse-ear cress).